The chain runs to 235 residues: Phosphoribosylaminoimidazole-succinocarboxamide synthase (235 aa).

The protein belongs to the SAICAR synthetase family.

The catalysed reaction is 5-amino-1-(5-phospho-D-ribosyl)imidazole-4-carboxylate + L-aspartate + ATP = (2S)-2-[5-amino-1-(5-phospho-beta-D-ribosyl)imidazole-4-carboxamido]succinate + ADP + phosphate + 2 H(+). The protein operates within purine metabolism; IMP biosynthesis via de novo pathway; 5-amino-1-(5-phospho-D-ribosyl)imidazole-4-carboxamide from 5-amino-1-(5-phospho-D-ribosyl)imidazole-4-carboxylate: step 1/2. In Clostridium perfringens (strain 13 / Type A), this protein is Phosphoribosylaminoimidazole-succinocarboxamide synthase.